The chain runs to 401 residues: Phosphoglycerate kinase (401 aa).

Substrate is bound by residues 23-25 (DFN), Arg39, 62-65 (HLGR), Arg121, and Arg154. Residues Lys207, Gly298, Glu329, and 355 to 358 (GGDT) each bind ATP.

Belongs to the phosphoglycerate kinase family. Monomer.

Its subcellular location is the cytoplasm. It carries out the reaction (2R)-3-phosphoglycerate + ATP = (2R)-3-phospho-glyceroyl phosphate + ADP. It functions in the pathway carbohydrate degradation; glycolysis; pyruvate from D-glyceraldehyde 3-phosphate: step 2/5. This chain is Phosphoglycerate kinase, found in Campylobacter fetus subsp. fetus (strain 82-40).